The primary structure comprises 174 residues: Negative modulator of initiation of replication (174 aa).

It belongs to the SeqA family. As to quaternary structure, homodimer. Polymerizes to form helical filaments.

It is found in the cytoplasm. In terms of biological role, negative regulator of replication initiation, which contributes to regulation of DNA replication and ensures that replication initiation occurs exactly once per chromosome per cell cycle. Binds to pairs of hemimethylated GATC sequences in the oriC region, thus preventing assembly of replication proteins and re-initiation at newly replicated origins. Repression is relieved when the region becomes fully methylated. The protein is Negative modulator of initiation of replication of Pseudoalteromonas atlantica (strain T6c / ATCC BAA-1087).